A 560-amino-acid polypeptide reads, in one-letter code: Membrane protein insertase YidC (560 aa).

Transmembrane regions (helical) follow at residues I5–F25, A334–F354, Y357–F377, L431–I451, L476–L496, and F522–W542.

This sequence belongs to the OXA1/ALB3/YidC family. Type 1 subfamily. As to quaternary structure, interacts with the Sec translocase complex via SecD. Specifically interacts with transmembrane segments of nascent integral membrane proteins during membrane integration.

It is found in the cell inner membrane. In terms of biological role, required for the insertion and/or proper folding and/or complex formation of integral membrane proteins into the membrane. Involved in integration of membrane proteins that insert both dependently and independently of the Sec translocase complex, as well as at least some lipoproteins. Aids folding of multispanning membrane proteins. In Rickettsia rickettsii (strain Sheila Smith), this protein is Membrane protein insertase YidC.